The following is a 69-amino-acid chain: Small, acid-soluble spore protein C4 (69 aa).

The protein belongs to the alpha/beta-type SASP family.

In terms of biological role, SASP are bound to spore DNA. They are double-stranded DNA-binding proteins that cause DNA to change to an a-like conformation. They protect the DNA backbone from chemical and enzymatic cleavage and are thus involved in dormant spore's high resistance to UV light. This chain is Small, acid-soluble spore protein C4 (SASP-C4), found in Priestia megaterium (Bacillus megaterium).